The primary structure comprises 205 residues: Small ribosomal subunit protein uS4 (205 aa).

Residues 1–44 are disordered; the sequence is MSKRHSQKYKIDRRMGENLWGRPKSPVNSRSYGPGQHGQRRKTK. In terms of domain architecture, S4 RNA-binding spans 94–173; the sequence is SRLDAIVYRC…LPEYIDLDAK (80 aa).

It belongs to the universal ribosomal protein uS4 family. Part of the 30S ribosomal subunit. Contacts protein S5. The interaction surface between S4 and S5 is involved in control of translational fidelity.

Functionally, one of the primary rRNA binding proteins, it binds directly to 16S rRNA where it nucleates assembly of the body of the 30S subunit. In terms of biological role, with S5 and S12 plays an important role in translational accuracy. The protein is Small ribosomal subunit protein uS4 of Maricaulis maris (strain MCS10) (Caulobacter maris).